The following is a 63-amino-acid chain: Cecropin-1/3 (63 aa).

Positions 1-23 (MNFYKVFIFVALILAISLGQSEA) are cleaved as a signal peptide. Position 62 is an arginine amide (Arg62).

It belongs to the cecropin family.

The protein localises to the secreted. Functionally, cecropins have lytic and antibacterial activity against several Gram-positive and Gram-negative bacteria. This chain is Cecropin-1/3 (Cec1), found in Drosophila virilis (Fruit fly).